A 432-amino-acid polypeptide reads, in one-letter code: MGRGAGSTALGLFQILPVFLCIFPPVTSPCKILKCNSEFWAATSGSHHLGAEETPEFCTALRAYAHCTRRTARTCRGDLAYHSAVHGIDDLMVQHNCSKDGPTSQPRLRTLPPGDSQERSDSPEICHYEKSFHKHSAAPNYTHCGLFGDPHLRTFTDTFQTCKVQGAWPLIDNNYLNVQVTNTPVLPGSSATATSKLTIIFKSFQECVEQKVYQAEMDELPAAFADGSKNGGDKHGANSLKITEKVSGQHIEIQAKYIGTTIVVRQVGRYLTFAVRMPEEVVNAVEDRDSQGLYLCLRGCPLNQQIDFQTFRLAQAAEGRARRKGPSLPAPPEAFTYESATAKCREKLPVEDLYFQSCVFDLLTTGDVNFMLAAYYAFEDVKMLHSNKDKLHLYERTRALAPGNAAPSEHPWALPALWVALLSLSQCWLGLL.

An N-terminal signal peptide occupies residues 1-29 (MGRGAGSTALGLFQILPVFLCIFPPVTSP). Residues 30 to 149 (CKILKCNSEF…NYTHCGLFGD (120 aa)) constitute a propeptide, removed in mature form. Asn-96 carries an N-linked (GlcNAc...) asparagine glycan. The segment at 99-122 (KDGPTSQPRLRTLPPGDSQERSDS) is disordered. Disulfide bonds link Cys-126/Cys-207 and Cys-144/Cys-296. N-linked (GlcNAc...) asparagine glycosylation is present at Asn-140. Asn-404 is lipidated: GPI-anchor amidated asparagine. A propeptide spans 405 to 432 (AAPSEHPWALPALWVALLSLSQCWLGLL) (removed in mature form).

Belongs to the repulsive guidance molecule (RGM) family. Autocatalytically cleaved at low pH; the two chains remain linked via two disulfide bonds.

The protein resides in the cell membrane. Acts as an axon-specific repulsive guidance molecule in the retinotectal system. Repulsive for a subset of axons of the temporal half of the retina. Provides thus positional information for the temporal axons invading the optic tectum in the stratum opticum. The sequence is that of Repulsive guidance molecule A (RGMA) from Gallus gallus (Chicken).